The sequence spans 161 residues: ATP synthase subunit b (161 aa).

A helical transmembrane segment spans residues 10-29 (SVIQLMSFFLLLYILKKFLY).

It belongs to the ATPase B chain family. F-type ATPases have 2 components, F(1) - the catalytic core - and F(0) - the membrane proton channel. F(1) has five subunits: alpha(3), beta(3), gamma(1), delta(1), epsilon(1). F(0) has three main subunits: a(1), b(2) and c(10-14). The alpha and beta chains form an alternating ring which encloses part of the gamma chain. F(1) is attached to F(0) by a central stalk formed by the gamma and epsilon chains, while a peripheral stalk is formed by the delta and b chains.

The protein localises to the cell inner membrane. F(1)F(0) ATP synthase produces ATP from ADP in the presence of a proton or sodium gradient. F-type ATPases consist of two structural domains, F(1) containing the extramembraneous catalytic core and F(0) containing the membrane proton channel, linked together by a central stalk and a peripheral stalk. During catalysis, ATP synthesis in the catalytic domain of F(1) is coupled via a rotary mechanism of the central stalk subunits to proton translocation. Its function is as follows. Component of the F(0) channel, it forms part of the peripheral stalk, linking F(1) to F(0). This is ATP synthase subunit b from Thermosipho melanesiensis (strain DSM 12029 / CIP 104789 / BI429).